A 510-amino-acid chain; its full sequence is 2-isopropylmalate synthase (510 aa).

Positions 4–266 (IQVFDTTLRD…ETNLKLDETK (263 aa)) constitute a Pyruvate carboxyltransferase domain. Mn(2+)-binding residues include Asp13, His201, His203, and Asn237. Residues 390–510 (QVETLQLQFV…DTARKDGVVS (121 aa)) form a regulatory domain region.

This sequence belongs to the alpha-IPM synthase/homocitrate synthase family. LeuA type 1 subfamily. Homodimer. Mn(2+) serves as cofactor.

The protein resides in the cytoplasm. The catalysed reaction is 3-methyl-2-oxobutanoate + acetyl-CoA + H2O = (2S)-2-isopropylmalate + CoA + H(+). Its pathway is amino-acid biosynthesis; L-leucine biosynthesis; L-leucine from 3-methyl-2-oxobutanoate: step 1/4. Catalyzes the condensation of the acetyl group of acetyl-CoA with 3-methyl-2-oxobutanoate (2-ketoisovalerate) to form 3-carboxy-3-hydroxy-4-methylpentanoate (2-isopropylmalate). In Staphylococcus carnosus (strain TM300), this protein is 2-isopropylmalate synthase.